We begin with the raw amino-acid sequence, 77 residues long: uncharacterized protein (77 aa).

This is an uncharacterized protein from Acidianus ambivalens (Desulfurolobus ambivalens).